We begin with the raw amino-acid sequence, 192 residues long: dTTP/UTP pyrophosphatase (192 aa).

D70 functions as the Proton acceptor in the catalytic mechanism.

The protein belongs to the Maf family. YhdE subfamily. A divalent metal cation serves as cofactor.

It localises to the cytoplasm. It carries out the reaction dTTP + H2O = dTMP + diphosphate + H(+). The enzyme catalyses UTP + H2O = UMP + diphosphate + H(+). Functionally, nucleoside triphosphate pyrophosphatase that hydrolyzes dTTP and UTP. May have a dual role in cell division arrest and in preventing the incorporation of modified nucleotides into cellular nucleic acids. The protein is dTTP/UTP pyrophosphatase of Alkaliphilus oremlandii (strain OhILAs) (Clostridium oremlandii (strain OhILAs)).